The chain runs to 93 residues: Cell division protein CrgA (93 aa).

The next 2 helical transmembrane spans lie at 31 to 51 (VWFV…LMVF) and 70 to 90 (LGPW…LLTM).

It belongs to the CrgA family.

It is found in the cell membrane. Functionally, involved in cell division. In Mycobacterium avium (strain 104), this protein is Cell division protein CrgA.